The following is a 412-amino-acid chain: DNA primase DnaG (412 aa).

One can recognise a Toprim domain in the interval 165 to 243 (PELIIVEGRA…KLDYVARAPT (79 aa)). Residues glutamate 171, aspartate 216, and aspartate 218 each contribute to the Mg(2+) site.

It belongs to the archaeal DnaG primase family. Forms a ternary complex with MCM helicase and DNA. Component of the archaeal exosome complex. It depends on Mg(2+) as a cofactor.

It carries out the reaction ssDNA + n NTP = ssDNA/pppN(pN)n-1 hybrid + (n-1) diphosphate.. Functionally, RNA polymerase that catalyzes the synthesis of short RNA molecules used as primers for DNA polymerase during DNA replication. Also part of the exosome, which is a complex involved in RNA degradation. Acts as a poly(A)-binding protein that enhances the interaction between heteromeric, adenine-rich transcripts and the exosome. This chain is DNA primase DnaG, found in Sulfolobus acidocaldarius (strain ATCC 33909 / DSM 639 / JCM 8929 / NBRC 15157 / NCIMB 11770).